We begin with the raw amino-acid sequence, 321 residues long: MIFLFRALKPLLVLALLTVVFVLGGCSNASVLDPKGPVAEQQSDLILLSIGFMLFIVGVVFVLFTIILVKYRDRKGKDNGSYNPEIHGNTFLEVVWTVIPILIVIALSVPTVQTIYSLEKAPEATKDKEPLVVYATSVDWKWVFSYPEQDIETVNYLNIPVDRPILFKISSADSMASLWIPQLGGQKYAMAGMLMDQYLQADKVGTYEGRNANFTGEHFADQEFDVNAVTEKDFNSWVKKTQNEAPKLTKEKYDELMLPENVDELTFSSTHLKYVDHGQDAEYAMEARKRLGYQAVSPHSKTDPFENVKKNEFKKSDDTEE.

The N-terminal stretch at 1-25 is a signal peptide; sequence MIFLFRALKPLLVLALLTVVFVLGG. A lipid anchor (N-palmitoyl cysteine) is attached at Cys26. Residue Cys26 is the site of S-diacylglycerol cysteine attachment. The next 2 membrane-spanning stretches (helical) occupy residues 49–69 and 90–110; these read SIGFMLFIVGVVFVLFTIILV and TFLEVVWTVIPILIVIALSVP. The interval 294–321 is disordered; it reads QAVSPHSKTDPFENVKKNEFKKSDDTEE. A compositionally biased stretch (basic and acidic residues) spans 300-321; the sequence is SKTDPFENVKKNEFKKSDDTEE.

This sequence belongs to the cytochrome c oxidase subunit 2 family. As to quaternary structure, interacts with FloT.

It is found in the cell membrane. The protein resides in the membrane raft. The enzyme catalyses 2 a quinol + O2 = 2 a quinone + 2 H2O. Functionally, catalyzes quinol oxidation with the concomitant reduction of oxygen to water. Major component for energy conversion during vegetative growth. Subunit II transfers the electrons from a quinol to the binuclear center of the catalytic subunit I. The polypeptide is Quinol oxidase subunit 2 (qoxA) (Bacillus subtilis (strain 168)).